Reading from the N-terminus, the 225-residue chain is NAD(P)H-quinone oxidoreductase subunit K, chloroplastic (225 aa).

[4Fe-4S] cluster contacts are provided by C43, C44, C108, and C139.

The protein belongs to the complex I 20 kDa subunit family. As to quaternary structure, NDH is composed of at least 16 different subunits, 5 of which are encoded in the nucleus. Requires [4Fe-4S] cluster as cofactor.

It localises to the plastid. It is found in the chloroplast thylakoid membrane. The catalysed reaction is a plastoquinone + NADH + (n+1) H(+)(in) = a plastoquinol + NAD(+) + n H(+)(out). It carries out the reaction a plastoquinone + NADPH + (n+1) H(+)(in) = a plastoquinol + NADP(+) + n H(+)(out). Its function is as follows. NDH shuttles electrons from NAD(P)H:plastoquinone, via FMN and iron-sulfur (Fe-S) centers, to quinones in the photosynthetic chain and possibly in a chloroplast respiratory chain. The immediate electron acceptor for the enzyme in this species is believed to be plastoquinone. Couples the redox reaction to proton translocation, and thus conserves the redox energy in a proton gradient. The protein is NAD(P)H-quinone oxidoreductase subunit K, chloroplastic of Platanus occidentalis (Sycamore).